The following is a 229-amino-acid chain: Peroxiredoxin 1 (229 aa).

Positions 33-192 constitute a Thioredoxin domain; sequence LGPKNKAPDF…AFRTLKAFQF (160 aa). Cys78 serves as the catalytic Cysteine sulfenic acid (-SOH) intermediate.

The protein belongs to the peroxiredoxin family. AhpC/Prx1 subfamily. Homodimer; disulfide-linked, upon oxidation.

It carries out the reaction a hydroperoxide + [thioredoxin]-dithiol = an alcohol + [thioredoxin]-disulfide + H2O. Thiol-specific peroxidase that catalyzes the reduction of hydrogen peroxide and organic hydroperoxides to water and alcohols, respectively. Plays a role in cell protection against oxidative stress by detoxifying peroxides and as sensor of hydrogen peroxide-mediated signaling events. The chain is Peroxiredoxin 1 (TSA1) from Brugia malayi (Filarial nematode worm).